A 496-amino-acid chain; its full sequence is Nucleolar and spindle-associated protein 1-B (496 aa).

Disordered stretches follow at residues 44-206 (YPES…HEAH), 250-294 (TPVS…STAN), and 338-496 (KSSS…VPVK). The segment covering 56 to 69 (GCTSLTDTDELNSS) has biased composition (polar residues). A compositionally biased stretch (basic and acidic residues) spans 121 to 134 (TQDKDCLESKKKEV). Residues 150–159 (QDTSKQNNSE) are compositionally biased toward polar residues. The segment covering 261–281 (SRLSLLSPLPRTTGASPSRTP) has biased composition (low complexity). Polar residues-rich tracts occupy residues 376–396 (NTTIQPSPAITESPCQQNKAN) and 403–423 (AQNTETPNTNKKGSFDLQASL). Positions 447 to 459 (SGSNSNVSVLKNN) are enriched in low complexity. Basic and acidic residues predominate over residues 467-485 (TREERRKQHELDRKGKRDQ).

The protein belongs to the NUSAP family. As to quaternary structure, interacts with DNA, microtubules, ipo7, kpna2 and kpnb1. Microtubule stabilization is inhibited by ipo7 and kpna2, while microtubule bundling is inhibited by kpnb1. Active GTP-bound ran causes dissociation of ipo7 and kpnb1.

It localises to the cytoplasm. The protein localises to the nucleus. It is found in the cytoskeleton. Its subcellular location is the spindle. Its function is as follows. Microtubule-associated protein with the capacity to bundle and stabilize microtubules. May associate with chromosomes and promote the organization of meiotic or mitotic spindle microtubules around them. The protein is Nucleolar and spindle-associated protein 1-B (nusap1-b) of Xenopus laevis (African clawed frog).